Reading from the N-terminus, the 233-residue chain is ATP-dependent Clp protease proteolytic subunit 2 (233 aa).

Serine 116 acts as the Nucleophile in catalysis. The active site involves histidine 141. A disordered region spans residues glutamate 214–alanine 233.

This sequence belongs to the peptidase S14 family. In terms of assembly, fourteen ClpP subunits assemble into 2 heptameric rings which stack back to back to give a disk-like structure with a central cavity, resembling the structure of eukaryotic proteasomes.

It localises to the cytoplasm. The catalysed reaction is Hydrolysis of proteins to small peptides in the presence of ATP and magnesium. alpha-casein is the usual test substrate. In the absence of ATP, only oligopeptides shorter than five residues are hydrolyzed (such as succinyl-Leu-Tyr-|-NHMec, and Leu-Tyr-Leu-|-Tyr-Trp, in which cleavage of the -Tyr-|-Leu- and -Tyr-|-Trp bonds also occurs).. Cleaves peptides in various proteins in a process that requires ATP hydrolysis. Has a chymotrypsin-like activity. Plays a major role in the degradation of misfolded proteins. The protein is ATP-dependent Clp protease proteolytic subunit 2 of Salinibacter ruber (strain DSM 13855 / M31).